The sequence spans 183 residues: Ribonuclease M5 (183 aa).

The 85-residue stretch at 6-90 folds into the Toprim domain; that stretch reads KEVIVVEGKD…AYISRVSGTK (85 aa). Residues E12, D59, and D61 each contribute to the Mg(2+) site.

It belongs to the ribonuclease M5 family. Requires Mg(2+) as cofactor.

It localises to the cytoplasm. The enzyme catalyses Endonucleolytic cleavage of RNA, removing 21 and 42 nucleotides, respectively, from the 5'- and 3'-termini of a 5S-rRNA precursor.. Its function is as follows. Required for correct processing of both the 5' and 3' ends of 5S rRNA precursor. Cleaves both sides of a double-stranded region yielding mature 5S rRNA in one step. The sequence is that of Ribonuclease M5 from Fusobacterium nucleatum subsp. nucleatum (strain ATCC 25586 / DSM 15643 / BCRC 10681 / CIP 101130 / JCM 8532 / KCTC 2640 / LMG 13131 / VPI 4355).